The primary structure comprises 131 residues: uncharacterized protein (131 aa).

A disordered region spans residues 101–131 (SWWPPSGVVRGGPSSWPPSGVAEPREALGLP).

This is an uncharacterized protein from Homo sapiens (Human).